Reading from the N-terminus, the 256-residue chain is Small ribosomal subunit protein uS2 (256 aa).

Belongs to the universal ribosomal protein uS2 family.

This is Small ribosomal subunit protein uS2 from Brucella anthropi (strain ATCC 49188 / DSM 6882 / CCUG 24695 / JCM 21032 / LMG 3331 / NBRC 15819 / NCTC 12168 / Alc 37) (Ochrobactrum anthropi).